The following is a 184-amino-acid chain: Effector CFEM1 (184 aa).

An N-terminal signal peptide occupies residues 1–17 (MKYSVAFVALAAVAAQA). In terms of domain architecture, CFEM spans 18–112 (QSLADVPKCA…PTTTAAATST (95 aa)). 4 disulfide bridges follow: cysteine 26-cysteine 68, cysteine 30-cysteine 63, cysteine 41-cysteine 48, and cysteine 50-cysteine 85. Position 45 (aspartate 45) interacts with heme. Disordered regions lie at residues 83–106 (NLCK…PTTT) and 136–163 (IIPT…EQAN). Residues 88–103 (PPKESEAKSTAEEEKP) are compositionally biased toward basic and acidic residues. Asparagine 163 is lipidated: GPI-anchor amidated asparagine. Residues 164–184 (GAAGLKGLGALAMAAFAALAL) constitute a propeptide, removed in mature form.

The protein belongs to the RBT5 family. In terms of assembly, interacts with Z.mays LRR5; the interaction is direct. Interacts (via CFEM domain) with Z.mays WAK17 isoform 2; the interaction is direct.

The protein resides in the secreted. It localises to the cell wall. Its subcellular location is the cell membrane. It is found in the cell septum. The protein localises to the cytoplasm. In terms of biological role, suppresses host programmed cell death during infection by binding to Z.mays WAK17 isoform 2 and Z.mays LRR5, to prevent activation of Z.mays WAK17 isoform 1 and the downstream hypersensitive response. The protein is Effector CFEM1 of Gibberella zeae (strain ATCC MYA-4620 / CBS 123657 / FGSC 9075 / NRRL 31084 / PH-1) (Wheat head blight fungus).